The chain runs to 934 residues: 2-oxoglutarate dehydrogenase E1 component (934 aa).

Belongs to the alpha-ketoglutarate dehydrogenase family. In terms of assembly, homodimer. Part of the 2-oxoglutarate dehydrogenase (OGDH) complex composed of E1 (2-oxoglutarate dehydrogenase), E2 (dihydrolipoamide succinyltransferase) and E3 (dihydrolipoamide dehydrogenase); the complex contains multiple copies of the three enzymatic components (E1, E2 and E3). The cofactor is thiamine diphosphate.

The enzyme catalyses N(6)-[(R)-lipoyl]-L-lysyl-[protein] + 2-oxoglutarate + H(+) = N(6)-[(R)-S(8)-succinyldihydrolipoyl]-L-lysyl-[protein] + CO2. Functionally, E1 component of the 2-oxoglutarate dehydrogenase (OGDH) complex which catalyzes the decarboxylation of 2-oxoglutarate, the first step in the conversion of 2-oxoglutarate to succinyl-CoA and CO(2). The protein is 2-oxoglutarate dehydrogenase E1 component of Staphylococcus epidermidis (strain ATCC 35984 / DSM 28319 / BCRC 17069 / CCUG 31568 / BM 3577 / RP62A).